Consider the following 28-residue polypeptide: Potassium channel toxin alpha-KTx 9.5 (28 aa).

Disulfide bonds link Cys3-Cys19, Cys6-Cys24, and Cys10-Cys26. Val28 is subject to Valine amide.

In terms of tissue distribution, expressed by the venom gland.

It localises to the secreted. Blocks voltage-gated potassium channels Kv1.1/KCNA1 (IC(50)=145 nM), Kv1.2/KCNA2 (IC(50)=2.5 nM), and Kv1.3/KCNA3 (IC(50)=15). Also inhibits calcium-activated potassium channels (KCa/KCNN). The polypeptide is Potassium channel toxin alpha-KTx 9.5 (Buthus occitanus tunetanus (Common European scorpion)).